Here is a 386-residue protein sequence, read N- to C-terminus: Ribosomal RNA small subunit methyltransferase H (386 aa).

S-adenosyl-L-methionine contacts are provided by residues 97–99 (GGH), Asp-116, Tyr-143, Asp-167, and Gln-174.

It belongs to the methyltransferase superfamily. RsmH family.

Its subcellular location is the cytoplasm. The catalysed reaction is cytidine(1402) in 16S rRNA + S-adenosyl-L-methionine = N(4)-methylcytidine(1402) in 16S rRNA + S-adenosyl-L-homocysteine + H(+). Specifically methylates the N4 position of cytidine in position 1402 (C1402) of 16S rRNA. This chain is Ribosomal RNA small subunit methyltransferase H, found in Mycobacterium avium (strain 104).